A 3374-amino-acid polypeptide reads, in one-letter code: Abnormal spindle-like microcephaly-associated protein homolog (3374 aa).

A phosphoserine mark is found at Ser212, Ser215, Ser300, and Ser325. A disordered region spans residues 492–518; that stretch reads SSKNIVTPPCKAASVARKRKSKGHTGD. Position 540 is a phosphoserine (Ser540). Residues 855–991 enclose the Calponin-homology (CH) 1 domain; it reads KASXDILLAF…LLWKIALAFQ (137 aa). Residues 992 to 1013 are a coiled coil; that stretch reads VDISLNLDQLKEEIDFLKKTQS. Ser1038 carries the post-translational modification Phosphoserine. The Calponin-homology (CH) 2 domain occupies 1045–1196; that stretch reads SESVKLLMDW…YLSFLCARLL (152 aa). IQ domains are found at residues 1201-1230, 1282-1313, 1472-1503, 1567-1596, 1590-1619, 1613-1642, 1647-1678, 1720-1749, 1743-1772, 1793-1822, 1816-1847, 1866-1897, 1939-1968, 1962-1993, 2012-2043, 2035-2066, 2085-2116, 2108-2137, 2158-2189, 2181-2212, 2230-2261, 2253-2284, 2303-2334, 2326-2357, 2376-2407, 2399-2430, 2449-2480, 2472-2503, 2542-2573, 2583-2612, 2606-2637, 2656-2685, 2732-2763, 2777-2806, 2827-2856, 2850-2881, 2872-2903, 2947-2976, 2997-3028, 3099-3128, and 3122-3153; these read ETRAARLIQTTWRQYKLKKDLKHHQERDKA, HSKSASIIQRYWRRYSTRKQFLKLKYYSIILQ, KRAAAIRLQAAFRGRRARNLCKQIRAACVLQS, TRSAVIVLQSACRRMQARKKFLHILTAVVK, ILTAVVKIQSYYRAYASRRKFLRLKKATVK, LKKATVKLQSIVRMKQARKQYLHLRAIAQQ, LRASCIKLQAFLRGYLVRKQVRLQRKAAVLLQ, VRRAVTCLQAAYRGYKVRRQLQQQSAAALK, QSAAALKIQAAFRGYRQRTKYQSMLQSALK, TRTAAISLQSAYRGWKVRKQMRKEHEAAVK, EHEAAVKIQSAFRTARAQKEFRLLKTAASVIQ, LRRAAVTLQSAWRGRAARRRIQKQQRCAIIIQ, TKGAAIILQSAFRGVRARKKVKEMHQAATT, MHQAATTIQSRYRAYQARKKYASYRAAAVIIQ, VKKAALKIQAVYRGVRERRQTRRMHMAATLIK, MHMAATLIKAAFKMQQSRRRYQQMRTAAIVIQ, TLKAVALLQAALRGARVRQNLRRMRTAATLIQ, MRTAATLIQAHYRGRRQQAYFNKLKKVTKT, LRRSAICIQAAFRGMRARKRLKAMHSAAAVIQ, MHSAAAVIQRRFRTLVMRRRFLSLRKTAVWVQ, LQKAAIKIQSWYRGWMVRKKTQEMRRAATVLQ, MRRAATVLQAAFRRHRARARYQAWRRASQVIQ, QXRSALVLQAAFRGMRIRRRLKRMHASATLIQ, MHASATLIQSRFRSVRVRKRFLSLKKAAVFVQ, LKKAIIIIQAFYRRRMVKKQLQEMHRAAALIQ, MHRAAALIQASFRMHRARLAFQTWKLAXVLIQ, WRHSAVVIQAAYKGLKARQLLREKHRAAVIIQ, KHRAAVIIQSTYRMYRQHFSYQKLQWATKVIQ, QHQAAITVQKHFRAFKTRKRYLHFRAKVVFVQ, RTQAAICIQSCFRGFKARRGIQGMHLAATR, MHLAATRIQSCYRRHRARADYQAKKRAVVVIQ, IQKSARTIQAAFRGMKVRQKLKTMPDEKMA, QRKAAVTIQKAFRKMVTRRLEKQRSAAVQIQS, QKRAALTLQRYFRTQQSRKRFLLYREAAVG, IRSSVIIIQARVKGFIQKRKFRKLKDSTIK, LKDSTIKIQAVWRRHKARKYLREVKAACRIQA, EVKAACRIQAWYRCRKARKEYLAVLRAVRIIQ, RHQAACLIQANFRGYKARQVFLQQKSAALT, LKKSTVVLQALVRGWLVRKRISEQRAKIRLLH, HSRAASVIQRAVRHFLLRKKQENLNKRIAK, and LNKRIAKIQALWRGYSWRKKNDTSKTKAIRQR.

It is found in the cytoplasm. The protein localises to the cytoskeleton. The protein resides in the spindle. It localises to the nucleus. Functionally, probable role in mitotic spindle regulation and coordination of mitotic processes. May have a preferential role in regulating neurogenesis. This is Abnormal spindle-like microcephaly-associated protein homolog (ASPM) from Ovis aries (Sheep).